The chain runs to 495 residues: DNA double-strand break repair helicase HerA (495 aa).

Residues R142, 151 to 156, and 459 to 460 each bind ATP; these read GSGKSN and KI.

The protein belongs to the HerA family. As to quaternary structure, interacts with Rad50 and Mre11.

The enzyme catalyses Couples ATP hydrolysis with the unwinding of duplex DNA at the replication fork by translocating in the 5'-3' direction. This creates two antiparallel DNA single strands (ssDNA). The leading ssDNA polymer is the template for DNA polymerase III holoenzyme which synthesizes a continuous strand.. The catalysed reaction is ATP + H2O = ADP + phosphate + H(+). It catalyses the reaction Couples ATP hydrolysis with the unwinding of duplex DNA by translocating in the 3'-5' direction.. ATPase activity is slightly stimulated by either circular single- or double-stranded (ds)DNA with a weak preference for dsDNA. Its function is as follows. Involved in DNA double-strand break (DSB) repair. Probably acts with NurA to stimulate resection of the 5' strand and produce the long 3' single-strand that is required for RadA loading. Has DNA-dependent ATPase activity and bidirectional DNA helicase activity. Loads on either a 3' or a 5' DNA tail for subsequent DNA unwinding; has no activity on blunt-end DNA. This Sulfolobus acidocaldarius (strain ATCC 33909 / DSM 639 / JCM 8929 / NBRC 15157 / NCIMB 11770) protein is DNA double-strand break repair helicase HerA.